The following is a 235-amino-acid chain: MPRFCYSRSGALLLALLLQTSIDVWSWCLESSQCQDLTTESNLLACIRACKLDLSLETPVFPGNGDEQPLTENPRKYVMGHFRWDRFGPRNSSSAGSAAQRRAEEEAVWGDGSPEPSPREGKRSYSMEHFRWGKPVGKKRRPVKVYPNVAENESAEAFPLEFKRELEGERPLGLEQVLESDAEKDDGPYRVEHFRWSNPPKDKRYGGFMTSEKSQTPLVTLFKNAIIKNAHKKGQ.

Positions 1 to 26 (MPRFCYSRSGALLLALLLQTSIDVWS) are cleaved as a signal peptide. The residue at position 87 (phenylalanine 87) is a Phenylalanine amide. Positions 88–126 (GPRNSSSAGSAAQRRAEEEAVWGDGSPEPSPREGKRSYS) are disordered. The segment covering 90 to 100 (RNSSSAGSAAQ) has biased composition (low complexity). A glycan (N-linked (GlcNAc...) asparagine) is linked at asparagine 91. Positions 103–121 (AEEEAVWGDGSPEPSPREG) are excised as a propeptide. A compositionally biased stretch (basic and acidic residues) spans 117–126 (SPREGKRSYS). Serine 124 carries the N-acetylserine; in Corticotropin modification. Residue valine 136 is modified to Valine amide. The N-linked (GlcNAc...) asparagine glycan is linked to asparagine 152. Serine 154 carries the phosphoserine modification. The tract at residues 179–210 (ESDAEKDDGPYRVEHFRWSNPPKDKRYGGFMT) is disordered. Basic and acidic residues predominate over residues 185-205 (DDGPYRVEHFRWSNPPKDKRY).

This sequence belongs to the POMC family. Specific enzymatic cleavages at paired basic residues yield the different active peptides. As to expression, ACTH and MSH are produced by the pituitary gland.

The protein localises to the secreted. In terms of biological role, stimulates the adrenal glands to release cortisol. Its function is as follows. Anorexigenic peptide. Increases the pigmentation of skin by increasing melanin production in melanocytes. Functionally, increases the pigmentation of skin by increasing melanin production in melanocytes. Endogenous orexigenic opiate. In terms of biological role, endogenous opiate. In Mus musculus (Mouse), this protein is Pro-opiomelanocortin (Pomc).